A 154-amino-acid polypeptide reads, in one-letter code: MKLLSKIMIIALAASMLQACNGPGGMNKQGTGTLLGGAGGALLGSQFGQGKGQLVGVGVGALLGAVLGGQIGAGMDEQDRRLAELTSQRALETAPSGSNVEWRNPDNGNYGYVTPNKTYRNSTGQYCREYTQTVVIGGKQQKAYGNACLQPDGQ.

The signal sequence occupies residues 1–19 (MKLLSKIMIIALAASMLQA). C20 carries N-palmitoyl cysteine lipidation. The S-diacylglycerol cysteine moiety is linked to residue C20.

This sequence belongs to the rickettsiale 17 kDa surface antigen family.

The protein localises to the cell outer membrane. The protein is 17 kDa surface antigen (omp) of Rickettsia montanensis.